The chain runs to 636 residues: Chaperone protein DnaK2 (636 aa).

Thr-198 is modified (phosphothreonine; by autocatalysis). A compositionally biased stretch (low complexity) spans 604 to 618 (EAGVGAPGAGPEAGT). The disordered stretch occupies residues 604–636 (EAGVGAPGAGPEAGTSSGGGDDVIDAEFSEPEK). Over residues 625 to 636 (DVIDAEFSEPEK) the composition is skewed to acidic residues.

It belongs to the heat shock protein 70 family.

Acts as a chaperone. The chain is Chaperone protein DnaK2 (dnaK2) from Synechocystis sp. (strain ATCC 27184 / PCC 6803 / Kazusa).